We begin with the raw amino-acid sequence, 492 residues long: MQLQQEKKKLLYSLCDVCNIQLHSAAQAQVHYNGKSHLKRVKQLNNGEVPKASASLAPTSLQSLSSSSSQGSSCHSNTLPTLVRTPSLMMQSGLDMKPFMTFPVESSSPVGLFPNFNTMDPVQKAVINHTFGVSIPPKKKQVISCNICQLRFNSDSQAEAHYKGSKHAKKLKAQESPKNKQKSAVAQDSGTKTITSTSTNTTTTTTTTSSCTAVTASCSDQTEKSTEPLAAHKVPASPQAFVPAPVAPAVALVPSPCKTAPVHASPPTEPTGLAVALKNTSKPAALPTAPSEPSVESEEEKAKKLLYCSLCKVAVNSLSQLEAHNTGSKHKTMLEARNGAGPIKAYPRPGSKLKVQATQLNKGSGLQNKTFHCEICDVHVNSEIQLKQHISSRRHKDRVAGKPTKPKYSPYNKQQRSSSSLAAKLALQNDLVKPISPAFLPSPFSTTTVPSISLHPRPNTSIFQTASLPHSFLRAAPGPIRPTTGSILFAPY.

2 Matrin-type zinc fingers span residues 8 to 44 (KKLLYSLCDVCNIQLHSAAQAQVHYNGKSHLKRVKQL) and 143 to 173 (ISCNICQLRFNSDSQAEAHYKGSKHAKKLKA). The disordered stretch occupies residues 159 to 206 (EAHYKGSKHAKKLKAQESPKNKQKSAVAQDSGTKTITSTSTNTTTTTT). The segment covering 189-206 (SGTKTITSTSTNTTTTTT) has biased composition (low complexity). Matrin-type zinc fingers lie at residues 303-337 (KKLLYCSLCKVAVNSLSQLEAHNTGSKHKTMLEAR) and 371-401 (FHCEICDVHVNSEIQLKQHISSRRHKDRVAG). Residues 388-420 (QHISSRRHKDRVAGKPTKPKYSPYNKQQRSSSS) are disordered.

The protein resides in the nucleus. Functionally, may play a role in p53/TP53-mediated apoptosis. This Danio rerio (Zebrafish) protein is Zinc finger protein 385B (znf385b).